Here is a 154-residue protein sequence, read N- to C-terminus: D-aminoacyl-tRNA deacylase (154 aa).

The short motif at 138-139 is the Gly-cisPro motif, important for rejection of L-amino acids element; sequence GP.

This sequence belongs to the DTD family. In terms of assembly, homodimer.

The protein localises to the cytoplasm. The catalysed reaction is glycyl-tRNA(Ala) + H2O = tRNA(Ala) + glycine + H(+). It catalyses the reaction a D-aminoacyl-tRNA + H2O = a tRNA + a D-alpha-amino acid + H(+). Its function is as follows. An aminoacyl-tRNA editing enzyme that deacylates mischarged D-aminoacyl-tRNAs. Also deacylates mischarged glycyl-tRNA(Ala), protecting cells against glycine mischarging by AlaRS. Acts via tRNA-based rather than protein-based catalysis; rejects L-amino acids rather than detecting D-amino acids in the active site. By recycling D-aminoacyl-tRNA to D-amino acids and free tRNA molecules, this enzyme counteracts the toxicity associated with the formation of D-aminoacyl-tRNA entities in vivo and helps enforce protein L-homochirality. This is D-aminoacyl-tRNA deacylase from Halorhodospira halophila (strain DSM 244 / SL1) (Ectothiorhodospira halophila (strain DSM 244 / SL1)).